The chain runs to 115 residues: ATP synthase subunit g, mitochondrial (115 aa).

Met-1 is subject to N-acetylmethionine. Phosphoserine is present on residues Ser-3 and Ser-62.

The protein belongs to the ATPase g subunit family. F-type ATPases have 2 components, CF(1) - the catalytic core - and CF(0) - the membrane proton channel. In yeast, the dimeric form of ATP synthase consists of 17 polypeptides: alpha, beta, gamma, delta, epsilon, 4 (B), 5 (OSCP), 6 (A), 8, 9 (C), d, E (Tim11), f, g, h, i/j and k. Phosphorylation on Ser-62 impairs ATP synthase dimerization.

It is found in the mitochondrion membrane. Functionally, mitochondrial membrane ATP synthase (F(1)F(0) ATP synthase or Complex V) produces ATP from ADP in the presence of a proton gradient across the membrane which is generated by electron transport complexes of the respiratory chain. F-type ATPases consist of two structural domains, F(1) - containing the extramembraneous catalytic core, and F(0) - containing the membrane proton channel, linked together by a central stalk and a peripheral stalk. During catalysis, ATP synthesis in the catalytic domain of F(1) is coupled via a rotary mechanism of the central stalk subunits to proton translocation. Part of the complex F(0) domain. Minor subunit located with subunit a in the membrane. This is ATP synthase subunit g, mitochondrial (ATP20) from Saccharomyces cerevisiae (strain ATCC 204508 / S288c) (Baker's yeast).